The chain runs to 143 residues: Deoxyuridine 5'-triphosphate nucleotidohydrolase (143 aa).

Substrate contacts are provided by residues 62–64 (RSG), asparagine 75, 79–81 (TID), and lysine 89.

Belongs to the dUTPase family. Mg(2+) is required as a cofactor.

The enzyme catalyses dUTP + H2O = dUMP + diphosphate + H(+). It participates in pyrimidine metabolism; dUMP biosynthesis; dUMP from dCTP (dUTP route): step 2/2. This enzyme is involved in nucleotide metabolism: it produces dUMP, the immediate precursor of thymidine nucleotides and it decreases the intracellular concentration of dUTP so that uracil cannot be incorporated into DNA. The polypeptide is Deoxyuridine 5'-triphosphate nucleotidohydrolase (Clostridium kluyveri (strain ATCC 8527 / DSM 555 / NBRC 12016 / NCIMB 10680 / K1)).